Consider the following 129-residue polypeptide: M-zodatoxin-Lt8k (129 aa).

An N-terminal signal peptide occupies residues 1-20; it reads MKYFVVALALVAAFACIAES. The propeptide occupies 21-60; it reads KPAESEHELAEVEEENELADLEDAVWLEHLADLSDLEEAR.

This sequence belongs to the cationic peptide 06 (cytoinsectotoxin) family. As to expression, expressed by the venom gland.

Its subcellular location is the secreted. Functionally, insecticidal, cytolytic and antimicrobial peptide. Forms voltage-dependent, ion-permeable channels in membranes. At high concentration causes cell membrane lysis. The polypeptide is M-zodatoxin-Lt8k (cit 1-10) (Lachesana tarabaevi (Spider)).